We begin with the raw amino-acid sequence, 302 residues long: Deoxyhypusine hydroxylase-B (302 aa).

5 HEAT-like PBS-type repeats span residues 49 to 75 (LAHEAAFALGQMQDAEAIPALEAVLKD), 82 to 108 (VRHEAAEALGAIGLEKSISLLEESLAV), 171 to 200 (MYERYAALFALRNDSGDAAVSAIVAALGVK), 204 to 230 (LRHEVAYVLGQLQNKAASDALSTVLKN), and 237 to 263 (VRHEAAEALGSIADQESIALLEEFAKD). Histidine 51, glutamate 52, histidine 84, and glutamate 85 together coordinate Fe cation. Positions 206, 207, 239, and 240 each coordinate Fe cation.

The protein belongs to the deoxyhypusine hydroxylase family. The cofactor is Fe(2+).

The enzyme catalyses [eIF5A protein]-deoxyhypusine + AH2 + O2 = [eIF5A protein]-hypusine + A + H2O. Its pathway is protein modification; eIF5A hypusination. In terms of biological role, catalyzes the hydroxylation of the N(6)-(4-aminobutyl)-L-lysine intermediate to form hypusine, an essential post-translational modification only found in mature eIF-5A factor. The sequence is that of Deoxyhypusine hydroxylase-B from Oryza sativa subsp. japonica (Rice).